The following is a 274-amino-acid chain: RsbT co-antagonist protein RsbRA (274 aa).

The STAS domain maps to 150–265 (SAPLIPVFEN…KGIQTALEMT (116 aa)). Thr171 and Thr205 each carry phosphothreonine.

Interacts with RsbRB and RsbS in the stressosome. The stressosome probably also contains RsbRC and RsbRD. Phosphorylated by RsbT. This threonine phosphorylation abrogates the ability of RsbRA to stimulate RsbT in vitro.

Its function is as follows. Acts as a positive regulator of sigma-B activity in response to salt and heat stress by stimulating the activity of the RsbT kinase toward RsbS in vitro. One of 4 functionally non-identical RsbR paralogs, it functions in the environmental signaling branch of the general stress response. Functionally, negative regulator of sigma-B activity. Non-phosphorylated RsbS binds to RsbT, preventing its association with RsbU. Requires any one of RsbRA, RsbRB, RsbRC or RsbRD to sequester RsbT. When RsbS and the RsbR paralog(s) are phosphorylated, they release RsbT, which can then bind and activate RsbU. This is RsbT co-antagonist protein RsbRA (rsbRA) from Bacillus subtilis (strain 168).